The sequence spans 954 residues: Glycine dehydrogenase (decarboxylating) (954 aa).

The residue at position 704 (lysine 704) is an N6-(pyridoxal phosphate)lysine.

This sequence belongs to the GcvP family. As to quaternary structure, the glycine cleavage system is composed of four proteins: P, T, L and H. Pyridoxal 5'-phosphate is required as a cofactor.

It carries out the reaction N(6)-[(R)-lipoyl]-L-lysyl-[glycine-cleavage complex H protein] + glycine + H(+) = N(6)-[(R)-S(8)-aminomethyldihydrolipoyl]-L-lysyl-[glycine-cleavage complex H protein] + CO2. The glycine cleavage system catalyzes the degradation of glycine. The P protein binds the alpha-amino group of glycine through its pyridoxal phosphate cofactor; CO(2) is released and the remaining methylamine moiety is then transferred to the lipoamide cofactor of the H protein. The polypeptide is Glycine dehydrogenase (decarboxylating) (Rhizobium etli (strain CIAT 652)).